Here is a 128-residue protein sequence, read N- to C-terminus: Large ribosomal subunit protein bL17 (128 aa).

This sequence belongs to the bacterial ribosomal protein bL17 family. In terms of assembly, part of the 50S ribosomal subunit. Contacts protein L32.

The protein is Large ribosomal subunit protein bL17 of Pseudomonas entomophila (strain L48).